The following is a 401-amino-acid chain: Cytochrome P450 BJ-1 (401 aa).

C350 is a binding site for heme.

The protein belongs to the cytochrome P450 family. It depends on heme as a cofactor.

Functionally, cytochromes P450 are a group of heme-thiolate monooxygenases. They oxidize a variety of structurally unrelated compounds, including steroids, fatty acids, and xenobiotics. The protein is Cytochrome P450 BJ-1 (cyp112) of Bradyrhizobium diazoefficiens (strain JCM 10833 / BCRC 13528 / IAM 13628 / NBRC 14792 / USDA 110).